Here is a 141-residue protein sequence, read N- to C-terminus: Large ribosomal subunit protein uL11 (141 aa).

Belongs to the universal ribosomal protein uL11 family. As to quaternary structure, part of the ribosomal stalk of the 50S ribosomal subunit. Interacts with L10 and the large rRNA to form the base of the stalk. L10 forms an elongated spine to which L12 dimers bind in a sequential fashion forming a multimeric L10(L12)X complex. One or more lysine residues are methylated.

Forms part of the ribosomal stalk which helps the ribosome interact with GTP-bound translation factors. This Lactobacillus acidophilus (strain ATCC 700396 / NCK56 / N2 / NCFM) protein is Large ribosomal subunit protein uL11.